We begin with the raw amino-acid sequence, 518 residues long: Membrane-bound lytic murein transglycosylase F (518 aa).

The N-terminal stretch at 1 to 21 (MKKLKINYLFIGILALLLAVA) is a signal peptide. Residues 22-269 (LWPSIPWFGK…RIEEKYLGHG (248 aa)) are non-LT domain. The LT domain stretch occupies residues 270-518 (DDFDYVDTRT…SRKGSEEKQN (249 aa)). Residue Glu314 is part of the active site.

In the N-terminal section; belongs to the bacterial solute-binding protein 3 family. The protein in the C-terminal section; belongs to the transglycosylase Slt family.

The protein localises to the cell outer membrane. The enzyme catalyses Exolytic cleavage of the (1-&gt;4)-beta-glycosidic linkage between N-acetylmuramic acid (MurNAc) and N-acetylglucosamine (GlcNAc) residues in peptidoglycan, from either the reducing or the non-reducing ends of the peptidoglycan chains, with concomitant formation of a 1,6-anhydrobond in the MurNAc residue.. Functionally, murein-degrading enzyme that degrades murein glycan strands and insoluble, high-molecular weight murein sacculi, with the concomitant formation of a 1,6-anhydromuramoyl product. Lytic transglycosylases (LTs) play an integral role in the metabolism of the peptidoglycan (PG) sacculus. Their lytic action creates space within the PG sacculus to allow for its expansion as well as for the insertion of various structures such as secretion systems and flagella. The chain is Membrane-bound lytic murein transglycosylase F from Escherichia coli O6:K15:H31 (strain 536 / UPEC).